Here is a 339-residue protein sequence, read N- to C-terminus: uncharacterized protein (339 aa).

NADP(+)-binding residues include I54, K78, D101, N128, Y213, and K217. Residue Y213 is the Proton donor of the active site. K217 acts as the Lowers pKa of active site Tyr in catalysis.

The protein belongs to the short-chain dehydrogenases/reductases (SDR) family.

This is an uncharacterized protein from Schizosaccharomyces pombe (strain 972 / ATCC 24843) (Fission yeast).